We begin with the raw amino-acid sequence, 359 residues long: Aminomethyltransferase (359 aa).

This sequence belongs to the GcvT family. In terms of assembly, the glycine cleavage system is composed of four proteins: P, T, L and H.

The enzyme catalyses N(6)-[(R)-S(8)-aminomethyldihydrolipoyl]-L-lysyl-[protein] + (6S)-5,6,7,8-tetrahydrofolate = N(6)-[(R)-dihydrolipoyl]-L-lysyl-[protein] + (6R)-5,10-methylene-5,6,7,8-tetrahydrofolate + NH4(+). Functionally, the glycine cleavage system catalyzes the degradation of glycine. This chain is Aminomethyltransferase, found in Idiomarina loihiensis (strain ATCC BAA-735 / DSM 15497 / L2-TR).